The sequence spans 285 residues: Urease accessory protein UreD (285 aa).

The protein belongs to the UreD family. In terms of assembly, ureD, UreF and UreG form a complex that acts as a GTP-hydrolysis-dependent molecular chaperone, activating the urease apoprotein by helping to assemble the nickel containing metallocenter of UreC. The UreE protein probably delivers the nickel.

It is found in the cytoplasm. In terms of biological role, required for maturation of urease via the functional incorporation of the urease nickel metallocenter. This chain is Urease accessory protein UreD, found in Citrobacter koseri (strain ATCC BAA-895 / CDC 4225-83 / SGSC4696).